The sequence spans 118 residues: MRVKNAVNAKKKRKKIMKAVKGYRGALSRRYRLAKQAYIKAKKHAYVGRKLKKRDYRKLWITRINIAARNEGLKYNELIHGLKISGININRKMLAELAVNDPESFKEYVNIAKQAIGK.

Belongs to the bacterial ribosomal protein bL20 family.

In terms of biological role, binds directly to 23S ribosomal RNA and is necessary for the in vitro assembly process of the 50S ribosomal subunit. It is not involved in the protein synthesizing functions of that subunit. This Thermosipho melanesiensis (strain DSM 12029 / CIP 104789 / BI429) protein is Large ribosomal subunit protein bL20.